The following is a 408-amino-acid chain: Peptidase T (408 aa).

Position 79 (H79) interacts with Zn(2+). Residue D81 is part of the active site. D139 serves as a coordination point for Zn(2+). E173 functions as the Proton acceptor in the catalytic mechanism. Zn(2+)-binding residues include E174, D196, and H378.

The protein belongs to the peptidase M20B family. Zn(2+) is required as a cofactor.

The protein resides in the cytoplasm. It catalyses the reaction Release of the N-terminal residue from a tripeptide.. In terms of biological role, cleaves the N-terminal amino acid of tripeptides. This Shouchella clausii (strain KSM-K16) (Alkalihalobacillus clausii) protein is Peptidase T.